Here is a 320-residue protein sequence, read N- to C-terminus: MRIAVDAMGGDYAPLEIVAGAVKWVAEEEERQIFLVGQEELLKQELKSYSYDPSRLIVVNASEVITMEESPATAIRRKKDASIVVASRMVKEKKADAIISCGSTGAQMAAAIFILGRMEGIERPPIVASIPNMTGAYTLLIDVGANVDCKPRQLLQFALLGKTYASIIYGVEQPRVALLNNGEEESKGNTVTMETYALLRQQSGINFTGNVEGRDIFTGKSDVIVCDGFTGNVLLKTMEGMALFIAQGILGAGGPMPAFFQRLDYTQTGGAPLLGINGLSIVCHGSSKREAVYNGLRIAEDCYNKNIIEMQQLELSKISG.

This sequence belongs to the PlsX family. As to quaternary structure, homodimer. Probably interacts with PlsY.

Its subcellular location is the cytoplasm. The catalysed reaction is a fatty acyl-[ACP] + phosphate = an acyl phosphate + holo-[ACP]. The protein operates within lipid metabolism; phospholipid metabolism. In terms of biological role, catalyzes the reversible formation of acyl-phosphate (acyl-PO(4)) from acyl-[acyl-carrier-protein] (acyl-ACP). This enzyme utilizes acyl-ACP as fatty acyl donor, but not acyl-CoA. The protein is Phosphate acyltransferase of Syntrophomonas wolfei subsp. wolfei (strain DSM 2245B / Goettingen).